The primary structure comprises 306 residues: Glutaminase (306 aa).

Substrate contacts are provided by serine 64, asparagine 115, glutamate 159, asparagine 166, tyrosine 190, tyrosine 242, and valine 260.

The protein belongs to the glutaminase family. In terms of assembly, homotetramer.

The catalysed reaction is L-glutamine + H2O = L-glutamate + NH4(+). This is Glutaminase from Aliivibrio fischeri (strain ATCC 700601 / ES114) (Vibrio fischeri).